The sequence spans 335 residues: uncharacterized protein (335 aa).

The interval 201-236 is disordered; that stretch reads GPMAKNKARRKEDNYDTHNCDDANQDKKEEAEGKNT. The segment covering 210–235 has biased composition (basic and acidic residues); the sequence is RKEDNYDTHNCDDANQDKKEEAEGKN.

Dispensable for normal development and fertility. This is an uncharacterized protein from Homo sapiens (Human).